The primary structure comprises 321 residues: Malate dehydrogenase (321 aa).

Residues 10–15 (GAGQIG) and Asp34 contribute to the NAD(+) site. Residues Arg83 and Arg89 each coordinate substrate. Residues Asn96 and 119–121 (VTN) each bind NAD(+). Asn121 and Arg152 together coordinate substrate. His176 functions as the Proton acceptor in the catalytic mechanism.

The protein belongs to the LDH/MDH superfamily. MDH type 3 family.

It carries out the reaction (S)-malate + NAD(+) = oxaloacetate + NADH + H(+). Functionally, catalyzes the reversible oxidation of malate to oxaloacetate. This is Malate dehydrogenase from Azorhizobium caulinodans (strain ATCC 43989 / DSM 5975 / JCM 20966 / LMG 6465 / NBRC 14845 / NCIMB 13405 / ORS 571).